The primary structure comprises 974 residues: ATP-dependent RNA helicase DBP7 (974 aa).

The disordered stretch occupies residues 1-135 (MDDNDDGLML…SSAASSSRKA (135 aa)). Low complexity predominate over residues 13-24 (AAPAAGSASVSS). The segment covering 25–48 (KRSKQTAKARFAQKRTAHQLRKQA) has biased composition (basic residues). Composition is skewed to low complexity over residues 67–85 (PASA…SPAA), 92–102 (ATSTSSAALSA), and 118–133 (TSRS…SSSR). The Q motif motif lies at 200–230 (SDFASCGLDPLLVYHLASKMNIGSNPTAIQK). Residues 236–477 (LLHPGLDRDI…GKTLVNPKII (242 aa)) form the Helicase ATP-binding domain. 249 to 256 (AQTGSGKT) contributes to the ATP binding site. The short motif at 381–384 (DEAD) is the DEAD box element. The Helicase C-terminal domain maps to 531 to 747 (LLRSYISRAR…TRKITPASIE (217 aa)). A disordered region spans residues 836-887 (KSSAIGASSTPASSHETTNKKRMRIAPDTAESDSSSDSSDDAGSDYESHSNK). The span at 840–851 (IGASSTPASSHE) shows a compositional bias: polar residues.

It belongs to the DEAD box helicase family. DDX31/DBP7 subfamily.

The protein localises to the nucleus. It is found in the nucleolus. It catalyses the reaction ATP + H2O = ADP + phosphate + H(+). In terms of biological role, ATP-binding RNA helicase involved in the biogenesis of 60S ribosomal subunits and is required for the normal formation of 25S and 5.8S rRNAs. This is ATP-dependent RNA helicase DBP7 (DBP7) from Mycosarcoma maydis (Corn smut fungus).